Consider the following 562-residue polypeptide: Delta-1-pyrroline-5-carboxylate dehydrogenase, mitochondrial (562 aa).

Residues methionine 1–tryptophan 23 constitute a mitochondrion transit peptide. Position 30 is an N6-succinyllysine (lysine 30). The residue at position 43 (serine 43) is a Phosphoserine. At lysine 51 the chain carries N6-acetyllysine. N6-acetyllysine; alternate occurs at positions 92, 98, 113, 129, and 174. N6-succinyllysine; alternate is present on residues lysine 92, lysine 98, lysine 113, lysine 129, and lysine 174. Residues serine 207, lysine 232, and glycine 285 to threonine 289 contribute to the NAD(+) site. Catalysis depends on glutamate 313, which acts as the Proton acceptor. Position 317 is an N6-acetyllysine (lysine 317). Lysine 346 carries the N6-succinyllysine modification. Residue cysteine 347 is the Nucleophile of the active site. Lysine 357 is modified (N6-acetyllysine; alternate). An N6-succinyllysine; alternate modification is found at lysine 357. Residues lysine 364 and lysine 375 each carry the N6-acetyllysine modification. N6-succinyllysine is present on lysine 394. NAD(+) is bound at residue glutamate 446. Lysine 461 carries the N6-acetyllysine modification. Lysine 508 carries the N6-acetyllysine; alternate modification. Lysine 508 is modified (N6-succinyllysine; alternate). Position 512 (serine 512) interacts with substrate. N6-acetyllysine is present on residues lysine 530 and lysine 551.

This sequence belongs to the aldehyde dehydrogenase family. Homodimer. In terms of processing, acetylation of Lys-98, Lys-113 and Lys-401 is observed in liver mitochondria from fasted mice but not from fed mice.

The protein resides in the mitochondrion matrix. The enzyme catalyses L-glutamate 5-semialdehyde + NAD(+) + H2O = L-glutamate + NADH + 2 H(+). Its pathway is amino-acid degradation; L-proline degradation into L-glutamate; L-glutamate from L-proline: step 2/2. In terms of biological role, irreversible conversion of delta-1-pyrroline-5-carboxylate (P5C), derived either from proline or ornithine, to glutamate. This is a necessary step in the pathway interconnecting the urea and tricarboxylic acid cycles. The preferred substrate is glutamic gamma-semialdehyde, other substrates include succinic, glutaric and adipic semialdehydes. The polypeptide is Delta-1-pyrroline-5-carboxylate dehydrogenase, mitochondrial (Aldh4a1) (Mus musculus (Mouse)).